The following is a 256-amino-acid chain: Leucyl/phenylalanyl-tRNA--protein transferase (256 aa).

The interval 232–256 is disordered; it reads DGCTGASRHGPGADMRRGDMSREST. The segment covering 245 to 256 has biased composition (basic and acidic residues); the sequence is DMRRGDMSREST.

Belongs to the L/F-transferase family.

The protein localises to the cytoplasm. The enzyme catalyses N-terminal L-lysyl-[protein] + L-leucyl-tRNA(Leu) = N-terminal L-leucyl-L-lysyl-[protein] + tRNA(Leu) + H(+). The catalysed reaction is N-terminal L-arginyl-[protein] + L-leucyl-tRNA(Leu) = N-terminal L-leucyl-L-arginyl-[protein] + tRNA(Leu) + H(+). It catalyses the reaction L-phenylalanyl-tRNA(Phe) + an N-terminal L-alpha-aminoacyl-[protein] = an N-terminal L-phenylalanyl-L-alpha-aminoacyl-[protein] + tRNA(Phe). Functionally, functions in the N-end rule pathway of protein degradation where it conjugates Leu, Phe and, less efficiently, Met from aminoacyl-tRNAs to the N-termini of proteins containing an N-terminal arginine or lysine. The chain is Leucyl/phenylalanyl-tRNA--protein transferase from Chromohalobacter salexigens (strain ATCC BAA-138 / DSM 3043 / CIP 106854 / NCIMB 13768 / 1H11).